Reading from the N-terminus, the 363-residue chain is Heat-inducible transcription repressor HrcA (363 aa).

It belongs to the HrcA family.

In terms of biological role, negative regulator of class I heat shock genes (grpE-dnaK-dnaJ and groELS operons). Prevents heat-shock induction of these operons. The sequence is that of Heat-inducible transcription repressor HrcA from Afipia carboxidovorans (strain ATCC 49405 / DSM 1227 / KCTC 32145 / OM5) (Oligotropha carboxidovorans).